The primary structure comprises 322 residues: Mitochondrial uncoupling protein 4 (322 aa).

Solcar repeat units lie at residues 20 to 114, 124 to 216, and 225 to 316; these read SKFL…LREV, YPLW…VKHY, and DNIS…IREM. A run of 6 helical transmembrane segments spans residues 22–39, 87–108, 126–143, 194–211, 228–247, and 287–310; these read FLLS…TFPL, WQGV…MVTY, LWKS…GQFL, PNIQ…TTYD, STHG…LGTP, and SLYK…WLTY.

This sequence belongs to the mitochondrial carrier (TC 2.A.29) family. As to quaternary structure, homotetramer.

It is found in the mitochondrion inner membrane. The protein resides in the cell projection. It localises to the neuron projection. It carries out the reaction H(+)(in) = H(+)(out). The catalysed reaction is chloride(in) = chloride(out). Facilitates proton transport across the inner mitochondrial membrane and may dissipate excessive proton gradient associated with oxidative and metabolic stress at neuronal synapses. Regulates glutamate-induced proton conductance in astrocytes, shifting the energy metabolism toward aerobic glycolysis and lactate transfer to neurons for ATP synthesis. Can transport chloride ions with lower efficiency. The transport mechanism remains to be elucidated. The protein is Mitochondrial uncoupling protein 4 of Mus musculus (Mouse).